The chain runs to 125 residues: MKLLIAIILMVLTGVCFADVGDYRLNGEDNARIESVVTDNCEKTAVLVGGDRLARVEIEYIATLCKPVALVIIYDRFDDIAAIPLKVTLKKVLKENSDEKINLLNKMGDLAGRIVAEQYLGMSFE.

This is an uncharacterized protein from Escherichia coli (strain K12).